Reading from the N-terminus, the 177-residue chain is MSRIGKKPVQVPAGITATVDGQKVTAKGPKGELFFVANDEISLKLENNAVVVTPVNQTKDARSKWGMSRTMIEGIFKGVKDGFERKLEINGVGYRAAMQGKNLQLALGFSHDVIYEPPVGISIVVPKPTEIVVSGINKQQVGQVAAEIREYRGPEPYKGKGVKYADERIVRKEGKKK.

Belongs to the universal ribosomal protein uL6 family. In terms of assembly, part of the 50S ribosomal subunit.

Its function is as follows. This protein binds to the 23S rRNA, and is important in its secondary structure. It is located near the subunit interface in the base of the L7/L12 stalk, and near the tRNA binding site of the peptidyltransferase center. The protein is Large ribosomal subunit protein uL6 of Rhizobium johnstonii (strain DSM 114642 / LMG 32736 / 3841) (Rhizobium leguminosarum bv. viciae).